A 1538-amino-acid polypeptide reads, in one-letter code: CLIP-associating protein 1 (1538 aa).

2 HEAT repeats span residues 87-124 and 163-200; these read AQIG…QAAN and LTLS…HVGE. Residues 235–292 form a disordered region; it reads SANDKNFDDEDSVDGNRPSSASSTSSKAPPSSRRNVGMGTTRRLGSSTLGSKSSAAKE. The residue at position 246 (S246) is a Phosphoserine. Low complexity predominate over residues 251–268; the sequence is RPSSASSTSSKAPPSSRR. HEAT repeat units follow at residues 405 to 440 and 441 to 477; these read HGAE…IRHT and HIPR…EWQT. The tract at residues 543 to 783 is disordered; sequence SDSIVSLPQS…DRFGLGQPGR (241 aa). Phosphoserine is present on residues S545, S548, S558, S559, and S568. The segment covering 548–567 has biased composition (low complexity); it reads SLPQSDRSSSSSQESLNRPL. Residues 574 to 594 show a composition bias toward low complexity; that stretch reads TGSTTSRASTVSTKSVSTTGS. S600 is subject to Phosphoserine. Positions 606–628 are enriched in low complexity; sequence AAASAKSKVSSSSGTTPFSSAAA. Residues S636, S646, S647, and S649 each carry the phosphoserine modification. A compositionally biased stretch (polar residues) spans 645 to 658; the sequence is QSSGSATNVASTPD. At T656 the chain carries Phosphothreonine. The tract at residues 662–785 is interaction with microtubules, MAPRE1 and MAPRE3; sequence RSRAKVVSQS…FGLGQPGRIP (124 aa). The span at 673 to 692 shows a compositional bias: low complexity; that stretch reads RSRSANPAGAGSRSSSPGKL. A phosphoserine mark is found at S684, S688, S695, and S705. Residues 693–705 are compositionally biased toward gly residues; the sequence is LGSGYGGLTGGSS. T711 is subject to Phosphothreonine. Phosphoserine is present on S714. Polar residues predominate over residues 724-733; it reads QGCSRETSPN. S787, S797, and S823 each carry phosphoserine. One copy of the HEAT 5 repeat lies at 974–1011; the sequence is QQFNILMRFIVDQTQTPNLKVKVAILKYIESLARQMDP. 2 disordered regions span residues 1080–1120 and 1136–1156; these read HLKN…CSHG and AKHP…SHKA. Positions 1082–1097 are enriched in polar residues; the sequence is KNSSNTSVGSPSNTIG. Phosphoserine is present on S1091. 2 positions are modified to phosphothreonine: T1095 and T1099. Positions 1106–1115 are enriched in low complexity; it reads SRTSPLTSPT. A Phosphoserine modification is found at S1113. Residues S1196 and S1223 each carry the phosphoserine modification. Residues 1215 to 1238 are disordered; the sequence is VSRDGGAASPATEGRGGSEVEGGR. Residues 1254–1538 are interaction with CLIP2; sequence RAFPGPRARD…SSSSDVSTHS (285 aa). The segment at 1254-1538 is interaction with PHLDB2 and RSN; it reads RAFPGPRARD…SSSSDVSTHS (285 aa). The localization to kinetochores stretch occupies residues 1256–1538; the sequence is FPGPRARDYN…SSSSDVSTHS (283 aa). Residues 1299 to 1330 are a coiled coil; sequence DHSDLVADLLKELSNHNERVEERKGALLELLK. HEAT repeat units follow at residues 1342-1379 and 1460-1497; these read EHFK…NQPA and QLLV…VIGE.

Belongs to the CLASP family. Interacts with CLIP2, ERC1, MAPRE1, MAPRE3, microtubules, PHLDB2 and RSN. The interaction with ERC1 may be mediated by PHLDB2. Interacts with GCC2; recruits CLASP1 to Golgi membranes. Interacts with MACF1. Interacts with mtcl2 and MTCL1.

The protein localises to the cytoplasm. It is found in the cytoskeleton. It localises to the microtubule organizing center. The protein resides in the centrosome. Its subcellular location is the chromosome. The protein localises to the centromere. It is found in the kinetochore. It localises to the spindle. The protein resides in the golgi apparatus. Its subcellular location is the trans-Golgi network. Its function is as follows. Microtubule plus-end tracking protein that promotes the stabilization of dynamic microtubules. Involved in the nucleation of noncentrosomal microtubules originating from the trans-Golgi network (TGN). Required for the polarization of the cytoplasmic microtubule arrays in migrating cells towards the leading edge of the cell. May act at the cell cortex to enhance the frequency of rescue of depolymerizing microtubules by attaching their plus-ends to cortical platforms composed of ERC1 and PHLDB2. This cortical microtubule stabilizing activity is regulated at least in part by phosphatidylinositol 3-kinase signaling. Also performs a similar stabilizing function at the kinetochore which is essential for the bipolar alignment of chromosomes on the mitotic spindle. This Homo sapiens (Human) protein is CLIP-associating protein 1 (CLASP1).